Here is a 140-residue protein sequence, read N- to C-terminus: Nucleoside diphosphate kinase (140 aa).

Residues Lys11, Phe59, Arg87, Thr93, Arg104, and Asn114 each contribute to the ATP site. Catalysis depends on His117, which acts as the Pros-phosphohistidine intermediate.

It belongs to the NDK family. In terms of assembly, homotetramer. Requires Mg(2+) as cofactor.

Its subcellular location is the cytoplasm. The catalysed reaction is a 2'-deoxyribonucleoside 5'-diphosphate + ATP = a 2'-deoxyribonucleoside 5'-triphosphate + ADP. The enzyme catalyses a ribonucleoside 5'-diphosphate + ATP = a ribonucleoside 5'-triphosphate + ADP. Functionally, major role in the synthesis of nucleoside triphosphates other than ATP. The ATP gamma phosphate is transferred to the NDP beta phosphate via a ping-pong mechanism, using a phosphorylated active-site intermediate. This is Nucleoside diphosphate kinase from Rickettsia typhi (strain ATCC VR-144 / Wilmington).